We begin with the raw amino-acid sequence, 85 residues long: Small ribosomal subunit protein uS17 (85 aa).

The protein belongs to the universal ribosomal protein uS17 family. Part of the 30S ribosomal subunit.

Functionally, one of the primary rRNA binding proteins, it binds specifically to the 5'-end of 16S ribosomal RNA. The sequence is that of Small ribosomal subunit protein uS17 from Actinobacillus succinogenes (strain ATCC 55618 / DSM 22257 / CCUG 43843 / 130Z).